A 422-amino-acid polypeptide reads, in one-letter code: 3-carboxy-cis,cis-muconate cycloisomerase (422 aa).

Belongs to the class-II fumarase/aspartase family. In terms of assembly, homotetramer.

The protein localises to the cytoplasm. The catalysed reaction is 2-(carboxymethyl)-5-oxo-2,5-dihydro-2-furoate = 3-carboxy-cis,cis-muconate + H(+). The protein operates within aromatic compound metabolism; beta-ketoadipate pathway; 5-oxo-4,5-dihydro-2-furylacetate from 3-carboxy-cis,cis-muconate: step 1/2. Functionally, catalyzes an anti cycloisomerization. The chain is 3-carboxy-cis,cis-muconate cycloisomerase (pcaB) from Pseudomonas putida (Arthrobacter siderocapsulatus).